The chain runs to 78 residues: Large ribosomal subunit protein bL28 (78 aa).

It belongs to the bacterial ribosomal protein bL28 family.

This Thermosynechococcus vestitus (strain NIES-2133 / IAM M-273 / BP-1) protein is Large ribosomal subunit protein bL28.